The primary structure comprises 354 residues: Selenide, water dikinase (354 aa).

The active site involves Cys-23. ATP-binding positions include Lys-26 and 54–56 (TSD). Asp-57 contributes to the Mg(2+) binding site. ATP-binding positions include Asp-74, Asp-97, and 145–147 (GHS). Asp-97 provides a ligand contact to Mg(2+). Residue Asp-233 participates in Mg(2+) binding.

It belongs to the selenophosphate synthase 1 family. Class I subfamily. As to quaternary structure, homodimer. Mg(2+) is required as a cofactor.

It catalyses the reaction hydrogenselenide + ATP + H2O = selenophosphate + AMP + phosphate + 2 H(+). Synthesizes selenophosphate from selenide and ATP. This chain is Selenide, water dikinase, found in Burkholderia ambifaria (strain MC40-6).